Consider the following 168-residue polypeptide: Cyclin-dependent kinase 4 inhibitor C (168 aa).

ANK repeat units lie at residues 4-33 (PWGN…NVNA), 37-65 (FGRT…NPNL), 69-98 (TGFA…DVNI), 102-132 (EGNL…NVGH), and 136-165 (KGDT…GGAT).

Belongs to the CDKN2 cyclin-dependent kinase inhibitor family. Heterodimer of p18 with CDK6.

Its function is as follows. Interacts strongly with CDK6, weakly with CDK4. Inhibits cell growth and proliferation with a correlated dependence on endogenous retinoblastoma protein RB. This is Cyclin-dependent kinase 4 inhibitor C (Cdkn2c) from Mus musculus (Mouse).